Reading from the N-terminus, the 479-residue chain is Small ribosomal subunit protein bS1 (479 aa).

S1 motif domains lie at 36-105 (GDIV…LSKK), 123-188 (DEAV…LSRR), 209-277 (GAIR…LSLK), and 294-363 (GQIV…LSLK). The interval 429 to 466 (TAQMEKFAAAEAEAANAPVSNGSSRSEESSGGTLASDA) is disordered. Low complexity predominate over residues 437-460 (AAEAEAANAPVSNGSSRSEESSGG).

Belongs to the bacterial ribosomal protein bS1 family. As to quaternary structure, binds uncharacterized protein MSMEG_2731/MSMEI_2664.

Binds mRNA, facilitating recognition of most mRNAs by the 30S ribosomal subunit during translation initiation. Plays a role in trans-translation; binds tmRNA (the product of the ssrA gene). Binds very poorly to pyrazinoic acid (POA), the active form of the prodrug pyrazinamide (PZA); POA does not disrupt trans-translation in this organism. M.smegmatis is resistant to the antibiotic PZA. In trans-translation Ala-aminoacylated transfer-messenger RNA (tmRNA, product of the ssrA gene; the 2 termini fold to resemble tRNA(Ala) while it encodes a short internal open reading frame (the tag peptide)) acts like a tRNA, entering the A-site of the ribosome and displacing the stalled mRNA (which is subsequently degraded). The ribosome then switches to translate the ORF on the tmRNA, the nascent peptide is terminated with the 'tag peptide' encoded by the tmRNA and thus targeted for degradation. The chain is Small ribosomal subunit protein bS1 (rpsA) from Mycolicibacterium smegmatis (strain ATCC 700084 / mc(2)155) (Mycobacterium smegmatis).